Consider the following 404-residue polypeptide: Cysteine desulfurase IscS (404 aa).

Pyridoxal 5'-phosphate-binding positions include A75 to T76, N155, Q183, and S203 to H205. K206 is subject to N6-(pyridoxal phosphate)lysine. T243 lines the pyridoxal 5'-phosphate pocket. C328 functions as the Cysteine persulfide intermediate in the catalytic mechanism. C328 lines the [2Fe-2S] cluster pocket.

It belongs to the class-V pyridoxal-phosphate-dependent aminotransferase family. NifS/IscS subfamily. In terms of assembly, homodimer. Forms a heterotetramer with IscU, interacts with other sulfur acceptors. The cofactor is pyridoxal 5'-phosphate.

Its subcellular location is the cytoplasm. It catalyses the reaction (sulfur carrier)-H + L-cysteine = (sulfur carrier)-SH + L-alanine. It functions in the pathway cofactor biosynthesis; iron-sulfur cluster biosynthesis. In terms of biological role, master enzyme that delivers sulfur to a number of partners involved in Fe-S cluster assembly, tRNA modification or cofactor biosynthesis. Catalyzes the removal of elemental sulfur atoms from cysteine to produce alanine. Functions as a sulfur delivery protein for Fe-S cluster synthesis onto IscU, an Fe-S scaffold assembly protein, as well as other S acceptor proteins. This Buchnera aphidicola subsp. Schizaphis graminum (strain Sg) protein is Cysteine desulfurase IscS.